The primary structure comprises 128 residues: ADA histone acetyltransferase complex component 2 (128 aa).

It is found in the cytoplasm. Its subcellular location is the nucleus. This is ADA histone acetyltransferase complex component 2 (AHC2) from Saccharomyces cerevisiae (strain ATCC 204508 / S288c) (Baker's yeast).